A 404-amino-acid polypeptide reads, in one-letter code: G2/mitotic-specific cyclin-B1 (404 aa).

It belongs to the cyclin family. Cyclin AB subfamily. As to quaternary structure, interacts with the CDK1 protein kinase to form a serine/threonine kinase holoenzyme complex also known as maturation promoting factor (MPF). The cyclin subunit imparts substrate specificity to the complex.

Essential for the control of the cell cycle at the G2/M (mitosis) transition. In Oryzias latipes (Japanese rice fish), this protein is G2/mitotic-specific cyclin-B1 (ccnb1).